Reading from the N-terminus, the 366-residue chain is GDSL esterase/lipase LTL1 (366 aa).

The first 27 residues, 1–27 (MNINCSPLGFLISLFFIVTFLAPQVKS), serve as a signal peptide directing secretion. S36 functions as the Nucleophile in the catalytic mechanism. Residue N117 is glycosylated (N-linked (GlcNAc...) asparagine). Catalysis depends on residues D326 and H329. N-linked (GlcNAc...) asparagine glycosylation occurs at N354.

Belongs to the 'GDSL' lipolytic enzyme family. In terms of assembly, binds to VLG at the endomembrane system. As to expression, mostly expressed in flowers, reproductive stems and rosette leaves, and, to a lower extent, in roots.

Its subcellular location is the secreted. Involved in the mechanisms of salt tolerance. Mediates resistance to LiCl and NaCl. This Arabidopsis thaliana (Mouse-ear cress) protein is GDSL esterase/lipase LTL1.